A 355-amino-acid polypeptide reads, in one-letter code: Peptide chain release factor 1 (355 aa).

Q233 is modified (N5-methylglutamine).

The protein belongs to the prokaryotic/mitochondrial release factor family. Post-translationally, methylated by PrmC. Methylation increases the termination efficiency of RF1.

It localises to the cytoplasm. Peptide chain release factor 1 directs the termination of translation in response to the peptide chain termination codons UAG and UAA. The chain is Peptide chain release factor 1 from Bacillus anthracis.